A 422-amino-acid polypeptide reads, in one-letter code: Serine--tRNA ligase (422 aa).

229 to 231 (TAE) serves as a coordination point for L-serine. An ATP-binding site is contributed by 260 to 262 (RKE). Glu-283 contacts L-serine. Position 347 to 350 (347 to 350 (EISS)) interacts with ATP. Ser-383 lines the L-serine pocket.

This sequence belongs to the class-II aminoacyl-tRNA synthetase family. Type-1 seryl-tRNA synthetase subfamily. Homodimer. The tRNA molecule binds across the dimer.

It is found in the cytoplasm. The catalysed reaction is tRNA(Ser) + L-serine + ATP = L-seryl-tRNA(Ser) + AMP + diphosphate + H(+). The enzyme catalyses tRNA(Sec) + L-serine + ATP = L-seryl-tRNA(Sec) + AMP + diphosphate + H(+). It participates in aminoacyl-tRNA biosynthesis; selenocysteinyl-tRNA(Sec) biosynthesis; L-seryl-tRNA(Sec) from L-serine and tRNA(Sec): step 1/1. In terms of biological role, catalyzes the attachment of serine to tRNA(Ser). Is also able to aminoacylate tRNA(Sec) with serine, to form the misacylated tRNA L-seryl-tRNA(Sec), which will be further converted into selenocysteinyl-tRNA(Sec). This chain is Serine--tRNA ligase, found in Natranaerobius thermophilus (strain ATCC BAA-1301 / DSM 18059 / JW/NM-WN-LF).